The chain runs to 232 residues: Adenosylcobinamide-GDP ribazoletransferase (232 aa).

Transmembrane regions (helical) follow at residues 31 to 51 (LPSF…LGAL), 59 to 79 (VFFL…GFLD), 102 to 122 (VGPF…NLYL), 126 to 146 (PFYF…LMAF), 167 to 187 (LLIS…YIIS), and 209 to 229 (VTGD…LLIL).

This sequence belongs to the CobS family. The cofactor is Mg(2+).

The protein resides in the cell inner membrane. The catalysed reaction is alpha-ribazole + adenosylcob(III)inamide-GDP = adenosylcob(III)alamin + GMP + H(+). It carries out the reaction alpha-ribazole 5'-phosphate + adenosylcob(III)inamide-GDP = adenosylcob(III)alamin 5'-phosphate + GMP + H(+). It participates in cofactor biosynthesis; adenosylcobalamin biosynthesis; adenosylcobalamin from cob(II)yrinate a,c-diamide: step 7/7. Its function is as follows. Joins adenosylcobinamide-GDP and alpha-ribazole to generate adenosylcobalamin (Ado-cobalamin). Also synthesizes adenosylcobalamin 5'-phosphate from adenosylcobinamide-GDP and alpha-ribazole 5'-phosphate. The sequence is that of Adenosylcobinamide-GDP ribazoletransferase from Thermosipho africanus (strain TCF52B).